The chain runs to 212 residues: Fe/S biogenesis protein NfuA (212 aa).

Positions 169 and 172 each coordinate [4Fe-4S] cluster.

Belongs to the NfuA family. As to quaternary structure, homodimer. Requires [4Fe-4S] cluster as cofactor.

Involved in iron-sulfur cluster biogenesis. Binds a 4Fe-4S cluster, can transfer this cluster to apoproteins, and thereby intervenes in the maturation of Fe/S proteins. Could also act as a scaffold/chaperone for damaged Fe/S proteins. This chain is Fe/S biogenesis protein NfuA, found in Acinetobacter baumannii (strain AB307-0294).